Here is a 1129-residue protein sequence, read N- to C-terminus: Nuclear pore complex protein 15 (1129 aa).

Belongs to the nucleoporin Nup133 family.

Its subcellular location is the nucleus envelope. The protein resides in the nucleus. The protein localises to the nuclear pore complex. Functionally, important for early nematode development. The polypeptide is Nuclear pore complex protein 15 (Caenorhabditis elegans).